The primary structure comprises 265 residues: Zinc transporter ZupT (265 aa).

A run of 8 helical transmembrane segments spans residues 6 to 26 (IAFA…GGAL), 37 to 57 (FMAA…FMEI), 77 to 97 (WTMM…DRLV), 122 to 142 (GMFT…ATFL), 150 to 170 (IAIP…IAVA), 184 to 204 (FWWA…GFAL), 208 to 228 (FIGP…MVFI), and 245 to 265 (CAIY…ALFI). Fe(2+) contacts are provided by asparagine 133 and glutamate 136. Positions 136 and 161 each coordinate Zn(2+). Residues asparagine 162, glutamate 165, and glutamate 194 each contribute to the Fe(2+) site. Glutamate 165 provides a ligand contact to Zn(2+).

It belongs to the ZIP transporter (TC 2.A.5) family. ZupT subfamily.

It is found in the cell membrane. It catalyses the reaction Zn(2+)(in) = Zn(2+)(out). Its function is as follows. Mediates zinc uptake. May also transport other divalent cations. In Corynebacterium aurimucosum (strain ATCC 700975 / DSM 44827 / CIP 107346 / CN-1) (Corynebacterium nigricans), this protein is Zinc transporter ZupT.